The sequence spans 152 residues: MLQKNKLSLSVQYPDKRLQDIITRPKLRSWVKAALLAPAQITLRFVDAAEGKDLNRNYRGKDYATNVLTFAYTEDEDSETTQADIILCTDVLQLEAAEQEKSVEEHAAHLVVHGVLHAQGYDHESDEEAEEMEALEIEILADLGFRNPYINL.

Residues His-113, His-117, and His-123 each coordinate Zn(2+).

Belongs to the endoribonuclease YbeY family. The cofactor is Zn(2+).

It localises to the cytoplasm. In terms of biological role, single strand-specific metallo-endoribonuclease involved in late-stage 70S ribosome quality control and in maturation of the 3' terminus of the 16S rRNA. The protein is Endoribonuclease YbeY of Janthinobacterium sp. (strain Marseille) (Minibacterium massiliensis).